Reading from the N-terminus, the 242-residue chain is Adapter protein MecA (242 aa).

It belongs to the MecA family. Homodimer.

Its function is as follows. Enables the recognition and targeting of unfolded and aggregated proteins to the ClpC protease or to other proteins involved in proteolysis. The chain is Adapter protein MecA from Streptococcus gordonii (strain Challis / ATCC 35105 / BCRC 15272 / CH1 / DL1 / V288).